Consider the following 350-residue polypeptide: uncharacterized protein (350 aa).

The interval 330-350 (RHPGDLRSEPHYRPSAKLAEF) is disordered. Over residues 331-341 (HPGDLRSEPHY) the composition is skewed to basic and acidic residues.

This is an uncharacterized protein from Mycobacterium tuberculosis.